The sequence spans 477 residues: Bile acid transporter (477 aa).

The next 15 helical transmembrane spans lie at 13-33 (FVPF…TAVL), 50-70 (WISL…GKLG), 83-103 (IVIF…IFML), 107-127 (FIVG…IVTE), 139-159 (LYML…GLIM), 166-186 (VMMW…TFSI), 206-226 (LVVV…NIGW), 228-248 (STAF…LVMV), 272-292 (LILF…IVFV), 301-321 (IISS…SVII), 333-353 (VLTF…LFKA), 359-379 (IFAA…TIFM), 381-401 (VALS…YGLF), 406-426 (APFG…ANIA), and 444-464 (ISSI…GIIL).

This sequence belongs to the major facilitator superfamily.

It is found in the cell membrane. The protein operates within lipid metabolism; bile acid degradation. In Clostridium scindens (strain JCM 10418 / VPI 12708), this protein is Bile acid transporter (baiG).